The following is a 234-amino-acid chain: Melanoregulin (234 aa).

The tract at residues 215–234 is disordered; that stretch reads MNQNISGGEDEDEDESEPDD. Residues 222–234 show a composition bias toward acidic residues; sequence GEDEDEDESEPDD.

It belongs to the melanoregulin family.

The protein resides in the apical cell membrane. It is found in the melanosome membrane. Its subcellular location is the lysosome membrane. The protein localises to the cytoplasmic vesicle membrane. Functionally, probably functions as a cargo-recognition protein that couples cytoplasmic vesicles to the transport machinery. Contributes to retrograde melanosome transport from the cell periphery to the center. Overexpression causes accumulation of late endosomes and/or lysosomes at the microtubule organising center (MTOC) at the center of the cell. Probably binds cholesterol and requires the presence of cholesterol in membranes to function in microtubule-mediated retrograde organelle transport. Binds phosphatidylinositol 3-phosphate, phosphatidylinositol 4-phosphate, phosphatidylinositol 5-phosphate and phosphatidylinositol 3,5-bisphosphate. The protein is Melanoregulin (mreg) of Danio rerio (Zebrafish).